The chain runs to 595 residues: Aspartate--tRNA(Asp/Asn) ligase (595 aa).

Glu175 is an L-aspartate binding site. The aspartate stretch occupies residues 199–202; it reads QQYK. L-aspartate is bound by residues Arg221 and His454. 221–223 contacts ATP; the sequence is RDE. Glu488 lines the ATP pocket. Arg495 contacts L-aspartate. Residue 540-543 participates in ATP binding; that stretch reads GIDR.

It belongs to the class-II aminoacyl-tRNA synthetase family. Type 1 subfamily. In terms of assembly, homodimer.

Its subcellular location is the cytoplasm. It catalyses the reaction tRNA(Asx) + L-aspartate + ATP = L-aspartyl-tRNA(Asx) + AMP + diphosphate. Its function is as follows. Aspartyl-tRNA synthetase with relaxed tRNA specificity since it is able to aspartylate not only its cognate tRNA(Asp) but also tRNA(Asn). Reaction proceeds in two steps: L-aspartate is first activated by ATP to form Asp-AMP and then transferred to the acceptor end of tRNA(Asp/Asn). The chain is Aspartate--tRNA(Asp/Asn) ligase from Sinorhizobium fredii (strain NBRC 101917 / NGR234).